We begin with the raw amino-acid sequence, 114 residues long: UPF0339 protein plu2779 (114 aa).

A run of 2 repeats spans residues 11–59 and 62–110.

This sequence belongs to the UPF0339 family. Duplicated subfamily.

The chain is UPF0339 protein plu2779 from Photorhabdus laumondii subsp. laumondii (strain DSM 15139 / CIP 105565 / TT01) (Photorhabdus luminescens subsp. laumondii).